The chain runs to 377 residues: MSSLNIKQGSDAHFPDYPLASPSNNEIDLLNLISVLWRAKKTVMAVVFAFACAGLLISFILPQKWTSAAVVTPPEPVQWQELEKSFTKLRVLDLDIKIDRTEAFNLFIKKFQSVSLLEEYLRSSPYVMDQLKEAKIDELDLHRAIVALSEKMKAVDDNASKKKDEPSLYTSWTLSFTAPTSEEAQTVLSGYIDYISTLVVKESLENVRNKLEIKTQFEKEKLAQDRIKTKNQLDANIQRLNYSLDIANAAGIKKPVYSNGQAVKDDPDFSISLGADGIERKLEIEKAVTDVAELNGELRNRQYLVEQLTKAHVNDVNFTPFKYQLSPSLPVKKDGPGKAIIVILSALIGGMVACGGVLLRYAMASRKQDAMMADHLV.

Topologically, residues 1–41 are cytoplasmic; the sequence is MSSLNIKQGSDAHFPDYPLASPSNNEIDLLNLISVLWRAKK. Residues 42–62 traverse the membrane as a helical segment; sequence TVMAVVFAFACAGLLISFILP. At 63–338 the chain is on the periplasmic side; it reads QKWTSAAVVT…LPVKKDGPGK (276 aa). The helical transmembrane segment at 339-359 threads the bilayer; it reads AIIVILSALIGGMVACGGVLL. Topologically, residues 360 to 377 are cytoplasmic; that stretch reads RYAMASRKQDAMMADHLV.

The protein belongs to the WzzB/Cld/Rol family.

It is found in the cell inner membrane. Functionally, part of the ferric enterobactin transport system. The chain is Ferric enterobactin transport protein FepE (fepE) from Escherichia coli (strain K12).